The sequence spans 185 residues: Peptidyl-tRNA hydrolase (185 aa).

Tyr14 is a tRNA binding site. Catalysis depends on His19, which acts as the Proton acceptor. The tRNA site is built by Phe64, Asn66, and Asn112.

It belongs to the PTH family. In terms of assembly, monomer.

It is found in the cytoplasm. The enzyme catalyses an N-acyl-L-alpha-aminoacyl-tRNA + H2O = an N-acyl-L-amino acid + a tRNA + H(+). Functionally, hydrolyzes ribosome-free peptidyl-tRNAs (with 1 or more amino acids incorporated), which drop off the ribosome during protein synthesis, or as a result of ribosome stalling. In terms of biological role, catalyzes the release of premature peptidyl moieties from peptidyl-tRNA molecules trapped in stalled 50S ribosomal subunits, and thus maintains levels of free tRNAs and 50S ribosomes. This chain is Peptidyl-tRNA hydrolase, found in Lactobacillus gasseri (strain ATCC 33323 / DSM 20243 / BCRC 14619 / CIP 102991 / JCM 1131 / KCTC 3163 / NCIMB 11718 / NCTC 13722 / AM63).